Reading from the N-terminus, the 168-residue chain is Endoribonuclease YbeY (168 aa).

Positions 123, 127, and 133 each coordinate Zn(2+).

Belongs to the endoribonuclease YbeY family. Requires Zn(2+) as cofactor.

The protein resides in the cytoplasm. Its function is as follows. Single strand-specific metallo-endoribonuclease involved in late-stage 70S ribosome quality control and in maturation of the 3' terminus of the 16S rRNA. This is Endoribonuclease YbeY from Francisella tularensis subsp. tularensis (strain SCHU S4 / Schu 4).